The primary structure comprises 385 residues: S-adenosylmethionine synthase (385 aa).

Residue His-15 coordinates ATP. Asp-17 contacts Mg(2+). Glu-43 is a binding site for K(+). Positions 56 and 99 each coordinate L-methionine. The flexible loop stretch occupies residues 99-109; the sequence is QSPEIAQGVDE. ATP is bound by residues 164 to 166, 230 to 231, Asp-239, 245 to 246, Ala-262, and Lys-266; these read DAK, RF, and RK. Residue Asp-239 participates in L-methionine binding. Lys-270 contacts L-methionine.

This sequence belongs to the AdoMet synthase family. In terms of assembly, homotetramer; dimer of dimers. Mg(2+) is required as a cofactor. The cofactor is K(+).

The protein resides in the cytoplasm. It carries out the reaction L-methionine + ATP + H2O = S-adenosyl-L-methionine + phosphate + diphosphate. It participates in amino-acid biosynthesis; S-adenosyl-L-methionine biosynthesis; S-adenosyl-L-methionine from L-methionine: step 1/1. Catalyzes the formation of S-adenosylmethionine (AdoMet) from methionine and ATP. The overall synthetic reaction is composed of two sequential steps, AdoMet formation and the subsequent tripolyphosphate hydrolysis which occurs prior to release of AdoMet from the enzyme. This chain is S-adenosylmethionine synthase, found in Hydrogenovibrio crunogenus (strain DSM 25203 / XCL-2) (Thiomicrospira crunogena).